A 269-amino-acid polypeptide reads, in one-letter code: 3-methyl-2-oxobutanoate hydroxymethyltransferase (269 aa).

Mg(2+) contacts are provided by D48 and D87. Residues D48–S49, D87, and K117 each bind 3-methyl-2-oxobutanoate. E119 provides a ligand contact to Mg(2+). Residue E186 is the Proton acceptor of the active site.

It belongs to the PanB family. In terms of assembly, homodecamer; pentamer of dimers. Mg(2+) is required as a cofactor.

It is found in the cytoplasm. The enzyme catalyses 3-methyl-2-oxobutanoate + (6R)-5,10-methylene-5,6,7,8-tetrahydrofolate + H2O = 2-dehydropantoate + (6S)-5,6,7,8-tetrahydrofolate. It participates in cofactor biosynthesis; (R)-pantothenate biosynthesis; (R)-pantoate from 3-methyl-2-oxobutanoate: step 1/2. Its function is as follows. Catalyzes the reversible reaction in which hydroxymethyl group from 5,10-methylenetetrahydrofolate is transferred onto alpha-ketoisovalerate to form ketopantoate. The protein is 3-methyl-2-oxobutanoate hydroxymethyltransferase of Moorella thermoacetica (strain ATCC 39073 / JCM 9320).